The following is a 529-amino-acid chain: Beta-galactoside alpha-2,6-sialyltransferase 2 (529 aa).

The Cytoplasmic segment spans residues 1–11; it reads MKPHLKQWRQR. Residues 12-32 form a helical; Signal-anchor for type II membrane protein membrane-spanning segment; the sequence is MLFGLFAGGLLFLLIFIYFTD. Over 33–529 the chain is Lumenal; it reads SNPAEPVPSS…PAPSPVIPHS (497 aa). Residues 142–186 form a disordered region; the sequence is SHSQGTLGFPSPGEPGPREGAFPAAQVQRRRVKKRHRRQRRSHVL. The segment covering 169–183 has biased composition (basic residues); sequence QRRRVKKRHRRQRRS. An N-linked (GlcNAc...) asparagine glycan is attached at Asn211. 3 disulfide bridges follow: Cys253–Cys519, Cys296–Cys448, and Cys466–Cys477.

The protein belongs to the glycosyltransferase 29 family.

It localises to the golgi apparatus. The protein resides in the golgi stack membrane. The catalysed reaction is a beta-D-galactoside + CMP-N-acetyl-beta-neuraminate = an N-acetyl-alpha-neuraminyl-(2-&gt;6)-beta-D-galactosyl derivative + CMP + H(+). Its function is as follows. Transfers sialic acid from the donor of substrate CMP-sialic acid to galactose containing acceptor substrates. Has alpha-2,6-sialyltransferase activity toward oligosaccharides that have the Gal-beta-1,4-GlcNAc sequence at the non-reducing end of their carbohydrate groups, but it has weak or no activities toward glycoproteins and glycolipids. This chain is Beta-galactoside alpha-2,6-sialyltransferase 2 (ST6GAL2), found in Pan troglodytes (Chimpanzee).